Reading from the N-terminus, the 497-residue chain is Protein nucleotidyltransferase YdiU (497 aa).

8 residues coordinate ATP: G92, G94, R95, K114, D126, G127, R177, and R184. D261 acts as the Proton acceptor in catalysis. The Mg(2+) site is built by N262 and D271. D271 is an ATP binding site.

This sequence belongs to the SELO family. The cofactor is Mg(2+). It depends on Mn(2+) as a cofactor.

It catalyses the reaction L-seryl-[protein] + ATP = 3-O-(5'-adenylyl)-L-seryl-[protein] + diphosphate. It carries out the reaction L-threonyl-[protein] + ATP = 3-O-(5'-adenylyl)-L-threonyl-[protein] + diphosphate. The catalysed reaction is L-tyrosyl-[protein] + ATP = O-(5'-adenylyl)-L-tyrosyl-[protein] + diphosphate. The enzyme catalyses L-histidyl-[protein] + UTP = N(tele)-(5'-uridylyl)-L-histidyl-[protein] + diphosphate. It catalyses the reaction L-seryl-[protein] + UTP = O-(5'-uridylyl)-L-seryl-[protein] + diphosphate. It carries out the reaction L-tyrosyl-[protein] + UTP = O-(5'-uridylyl)-L-tyrosyl-[protein] + diphosphate. In terms of biological role, nucleotidyltransferase involved in the post-translational modification of proteins. It can catalyze the addition of adenosine monophosphate (AMP) or uridine monophosphate (UMP) to a protein, resulting in modifications known as AMPylation and UMPylation. This chain is Protein nucleotidyltransferase YdiU, found in Bordetella petrii (strain ATCC BAA-461 / DSM 12804 / CCUG 43448).